The following is a 293-amino-acid chain: DNA repair protein RecO (293 aa).

Belongs to the RecO family.

Functionally, involved in DNA repair and RecF pathway recombination. The chain is DNA repair protein RecO from Acaryochloris marina (strain MBIC 11017).